Here is a 311-residue protein sequence, read N- to C-terminus: tRNA dimethylallyltransferase (311 aa).

Gly-8–Ser-15 contributes to the ATP binding site. Thr-10–Ser-15 contacts substrate.

This sequence belongs to the IPP transferase family. Monomer. Mg(2+) serves as cofactor.

It catalyses the reaction adenosine(37) in tRNA + dimethylallyl diphosphate = N(6)-dimethylallyladenosine(37) in tRNA + diphosphate. In terms of biological role, catalyzes the transfer of a dimethylallyl group onto the adenine at position 37 in tRNAs that read codons beginning with uridine, leading to the formation of N6-(dimethylallyl)adenosine (i(6)A). The chain is tRNA dimethylallyltransferase from Mycobacterium leprae (strain Br4923).